We begin with the raw amino-acid sequence, 387 residues long: Pyrophosphate--fructose 6-phosphate 1-phosphotransferase 3 (387 aa).

Gly-15 lines the diphosphate pocket. Residue Asp-114 coordinates Mg(2+). Substrate-binding positions include Thr-140–Asp-142, Met-186–Arg-188, Glu-247, and Tyr-308–Arg-311. Asp-142 functions as the Proton acceptor in the catalytic mechanism.

This sequence belongs to the phosphofructokinase type A (PFKA) family. PPi-dependent PFK group II subfamily. Clade 'Short' sub-subfamily. Homotetramer. Requires Mg(2+) as cofactor.

The protein localises to the cytoplasm. It catalyses the reaction beta-D-fructose 6-phosphate + diphosphate = beta-D-fructose 1,6-bisphosphate + phosphate + H(+). It participates in carbohydrate degradation; glycolysis; D-glyceraldehyde 3-phosphate and glycerone phosphate from D-glucose: step 3/4. With respect to regulation, non-allosteric. Catalyzes the phosphorylation of D-fructose 6-phosphate, the first committing step of glycolysis. Uses inorganic phosphate (PPi) as phosphoryl donor instead of ATP like common ATP-dependent phosphofructokinases (ATP-PFKs), which renders the reaction reversible, and can thus function both in glycolysis and gluconeogenesis. Consistently, PPi-PFK can replace the enzymes of both the forward (ATP-PFK) and reverse (fructose-bisphosphatase (FBPase)) reactions. The chain is Pyrophosphate--fructose 6-phosphate 1-phosphotransferase 3 (pfk3) from Trichomonas vaginalis (strain ATCC PRA-98 / G3).